The primary structure comprises 711 residues: Interferon-induced GTP-binding protein Mx2 (711 aa).

Disordered regions lie at residues 1-26 (MPKP…HKEM) and 62-88 (MLTL…NLYS). The span at 66 to 82 (SPQQPGGKSGQQTSKGP) shows a compositional bias: low complexity. The Dynamin-type G domain maps to 112–383 (DLALPTIAVI…LIGHISKSLP (272 aa)). The interval 122-129 (GDQSSGKS) is G1 motif. A GTP-binding site is contributed by 122 to 129 (GDQSSGKS). The segment at 147–149 (ITR) is G2 motif. The tract at residues 221 to 224 (DLPG) is G3 motif. Residues 221–225 (DLPGI) and 290–293 (TKPD) contribute to the GTP site. The G4 motif stretch occupies residues 290–293 (TKPD). A G5 motif region spans residues 322-325 (KCRG). The GED domain maps to 619–710 (ITEIGVHVNA…TLSKFAQSLQ (92 aa)).

It belongs to the TRAFAC class dynamin-like GTPase superfamily. Dynamin/Fzo/YdjA family. In terms of tissue distribution, ubiquitous.

It is found in the cytoplasm. It localises to the nucleus. Interferon-induced dynamin-like GTPase with antiviral activity against influenza virus A (FLUAV). The chain is Interferon-induced GTP-binding protein Mx2 (MX2) from Sus scrofa (Pig).